The following is a 163-amino-acid chain: Tail tube protein gp19 (163 aa).

Belongs to the T4-like viruses Gp19 protein family. In terms of assembly, homohexamer. The tube is composed of gp19 hexameric rings. Interacts with gp54.

It is found in the virion. Its function is as follows. Forms the central cylindrical rigid tube, which is surrounded by the outer contractile sheath assembled from gp18 subunits. The tail tube first 2 annuli are formed by gp48 and gp54, which are in continuation of the spike complex. During infection, contraction of the sheath drives the central tube through the host outer membrane, creating a channel for DNA ejection from the capsid into the host cell. This Escherichia coli (Bacteriophage T4) protein is Tail tube protein gp19 (19).